Here is a 251-residue protein sequence, read N- to C-terminus: Probable transcriptional regulatory protein BLA_1344 (251 aa).

This sequence belongs to the TACO1 family.

It is found in the cytoplasm. The polypeptide is Probable transcriptional regulatory protein BLA_1344 (Bifidobacterium animalis subsp. lactis (strain AD011)).